Here is a 358-residue protein sequence, read N- to C-terminus: Sulfate/thiosulfate import ATP-binding protein CysA (358 aa).

Residues 3–237 (IKIENLEKHF…PQTPFVTQFV (235 aa)) enclose the ABC transporter domain. Position 35–42 (35–42 (GPSGCGKT)) interacts with ATP.

This sequence belongs to the ABC transporter superfamily. Sulfate/tungstate importer (TC 3.A.1.6) family. The complex is composed of two ATP-binding proteins (CysA), two transmembrane proteins (CysT and CysW) and a solute-binding protein (CysP).

Its subcellular location is the cell inner membrane. The catalysed reaction is sulfate(out) + ATP + H2O = sulfate(in) + ADP + phosphate + H(+). It catalyses the reaction thiosulfate(out) + ATP + H2O = thiosulfate(in) + ADP + phosphate + H(+). Part of the ABC transporter complex CysAWTP involved in sulfate/thiosulfate import. Responsible for energy coupling to the transport system. The sequence is that of Sulfate/thiosulfate import ATP-binding protein CysA from Mannheimia succiniciproducens (strain KCTC 0769BP / MBEL55E).